Here is a 312-residue protein sequence, read N- to C-terminus: Protoheme IX farnesyltransferase (312 aa).

Transmembrane regions (helical) follow at residues 12–32 (LALT…PAML), 41–61 (FGLI…ANTF), 93–113 (VFAW…CHSW), 114–134 (LAAG…TKWL), 141–161 (NVIW…AVIT), 168–188 (FHAG…IFFW), 240–260 (VPAA…WFII), and 290–310 (ILFV…AHAV).

This sequence belongs to the UbiA prenyltransferase family. Protoheme IX farnesyltransferase subfamily.

The protein localises to the cell membrane. It catalyses the reaction heme b + (2E,6E)-farnesyl diphosphate + H2O = Fe(II)-heme o + diphosphate. Its pathway is porphyrin-containing compound metabolism; heme O biosynthesis; heme O from protoheme: step 1/1. Its function is as follows. Converts heme B (protoheme IX) to heme O by substitution of the vinyl group on carbon 2 of heme B porphyrin ring with a hydroxyethyl farnesyl side group. The chain is Protoheme IX farnesyltransferase from Corynebacterium jeikeium (strain K411).